A 307-amino-acid polypeptide reads, in one-letter code: Putative flagellar export/assembly protein LafU (307 aa).

A helical membrane pass occupies residues 32 to 54 (AWKVAFADFTLAMMALFMTLWIV). Residues 87 to 108 (SPSHPPKPATVAAPEETEKKAR) form a disordered region. Residues 154-272 (LRVLIKDDQN…RIEIMVLTKS (119 aa)) form the OmpA-like domain.

Belongs to the MotB family.

It is found in the cell inner membrane. Part of the flagellar gene cluster Flag-2. However, the Flag-2 flagellar system could be inactive in strain 042 due to a frameshift in lfgC. The protein is Putative flagellar export/assembly protein LafU of Escherichia coli O44:H18 (strain 042 / EAEC).